The primary structure comprises 171 residues: Translation initiation factor IF-3 (171 aa).

Belongs to the IF-3 family. Monomer.

It is found in the cytoplasm. Its function is as follows. IF-3 binds to the 30S ribosomal subunit and shifts the equilibrium between 70S ribosomes and their 50S and 30S subunits in favor of the free subunits, thus enhancing the availability of 30S subunits on which protein synthesis initiation begins. The protein is Translation initiation factor IF-3 of Halalkalibacterium halodurans (strain ATCC BAA-125 / DSM 18197 / FERM 7344 / JCM 9153 / C-125) (Bacillus halodurans).